Consider the following 215-residue polypeptide: Thymidylate kinase (215 aa).

12 to 19 (GLEGAGKT) provides a ligand contact to ATP.

The protein belongs to the thymidylate kinase family.

It carries out the reaction dTMP + ATP = dTDP + ADP. Its function is as follows. Phosphorylation of dTMP to form dTDP in both de novo and salvage pathways of dTTP synthesis. In Halorhodospira halophila (strain DSM 244 / SL1) (Ectothiorhodospira halophila (strain DSM 244 / SL1)), this protein is Thymidylate kinase.